Consider the following 618-residue polypeptide: Phosphoenolpyruvate carboxykinase [GTP] (618 aa).

Substrate contacts are provided by residues arginine 83 and tyrosine 217–glycine 219. Residues lysine 226 and histidine 245 each contribute to the Mn(2+) site. Residue serine 267 participates in substrate binding. Methionine 268 to serine 273 is a binding site for GTP. Cysteine 269 is a catalytic residue. Mn(2+) is bound at residue aspartate 286. A substrate-binding site is contributed by asparagine 381–arginine 383. GTP is bound by residues arginine 383 and arginine 415.

This sequence belongs to the phosphoenolpyruvate carboxykinase [GTP] family. The cofactor is Mn(2+).

Its subcellular location is the cytoplasm. The enzyme catalyses oxaloacetate + GTP = phosphoenolpyruvate + GDP + CO2. The protein operates within carbohydrate biosynthesis; gluconeogenesis. Functionally, catalyzes the conversion of oxaloacetate (OAA) to phosphoenolpyruvate (PEP), the rate-limiting step in the metabolic pathway that produces glucose from lactate and other precursors derived from the citric acid cycle. The protein is Phosphoenolpyruvate carboxykinase [GTP] of Pyrococcus abyssi (strain GE5 / Orsay).